The sequence spans 583 residues: Protein FMP25, mitochondrial (583 aa).

The N-terminal 25 residues, 1–25 (MSFRLFTRTSQRLPRLNWVSPIRRY), are a transit peptide targeting the mitochondrion. The helical transmembrane segment at 83 to 105 (AVGQGILILVVVGGLGTAYLRWP) threads the bilayer. 4 RCC1 repeats span residues 332 to 389 (KGQF…AIDK), 390 to 452 (TGEI…VTIR), 459 to 510 (DHHY…TETE), and 512 to 569 (ENEV…KEQR).

The protein resides in the mitochondrion membrane. The protein is Protein FMP25, mitochondrial (FMP25) of Saccharomyces cerevisiae (strain ATCC 204508 / S288c) (Baker's yeast).